Here is a 231-residue protein sequence, read N- to C-terminus: Orotidine 5'-phosphate decarboxylase (231 aa).

Substrate is bound by residues D11, K34, 61–70, T117, R179, Q188, G208, and R209; that span reads DLKLHDIPNT. K63 acts as the Proton donor in catalysis.

Belongs to the OMP decarboxylase family. Type 1 subfamily. As to quaternary structure, homodimer.

It carries out the reaction orotidine 5'-phosphate + H(+) = UMP + CO2. It functions in the pathway pyrimidine metabolism; UMP biosynthesis via de novo pathway; UMP from orotate: step 2/2. Catalyzes the decarboxylation of orotidine 5'-monophosphate (OMP) to uridine 5'-monophosphate (UMP). This Streptococcus suis (strain 98HAH33) protein is Orotidine 5'-phosphate decarboxylase.